The sequence spans 425 residues: Serine--tRNA ligase (425 aa).

231–233 (TAE) contributes to the L-serine binding site. ATP is bound at residue 262 to 264 (RSE). Residue E285 participates in L-serine binding. 349–352 (EISS) is a binding site for ATP. An L-serine-binding site is contributed by S385.

Belongs to the class-II aminoacyl-tRNA synthetase family. Type-1 seryl-tRNA synthetase subfamily. Homodimer. The tRNA molecule binds across the dimer.

It localises to the cytoplasm. The enzyme catalyses tRNA(Ser) + L-serine + ATP = L-seryl-tRNA(Ser) + AMP + diphosphate + H(+). It carries out the reaction tRNA(Sec) + L-serine + ATP = L-seryl-tRNA(Sec) + AMP + diphosphate + H(+). Its pathway is aminoacyl-tRNA biosynthesis; selenocysteinyl-tRNA(Sec) biosynthesis; L-seryl-tRNA(Sec) from L-serine and tRNA(Sec): step 1/1. Catalyzes the attachment of serine to tRNA(Ser). Is also able to aminoacylate tRNA(Sec) with serine, to form the misacylated tRNA L-seryl-tRNA(Sec), which will be further converted into selenocysteinyl-tRNA(Sec). This chain is Serine--tRNA ligase, found in Halalkalibacterium halodurans (strain ATCC BAA-125 / DSM 18197 / FERM 7344 / JCM 9153 / C-125) (Bacillus halodurans).